A 146-amino-acid polypeptide reads, in one-letter code: Large ribosomal subunit protein uL15 (146 aa).

Residues 1-56 are disordered; it reads MGLRLNELSPGVGAKKTAQRRGRGIGSGLGKTGGRGVKGQKSRSGSSVRSGFEGGQ. The span at 24–37 shows a compositional bias: gly residues; sequence GIGSGLGKTGGRGV.

It belongs to the universal ribosomal protein uL15 family. As to quaternary structure, part of the 50S ribosomal subunit.

In terms of biological role, binds to the 23S rRNA. This is Large ribosomal subunit protein uL15 from Psychrobacter arcticus (strain DSM 17307 / VKM B-2377 / 273-4).